We begin with the raw amino-acid sequence, 344 residues long: Nuclear distribution protein nudE-like 1-A (344 aa).

Positions 26-187 form a coiled coil; the sequence is YKKSYKEAQE…RQELAVRDTR (162 aa). Residues 181–190 show a composition bias toward basic and acidic residues; that stretch reads LAVRDTRSEV. 2 disordered regions span residues 181-209 and 322-344; these read LAVRDTRSEVTRMSAPSSPTPDNDKTDSA and PGDGTHITAPPRSNSPSGLVLSV.

The protein belongs to the nudE family. Phosphorylated in mitosis.

The protein localises to the cytoplasm. It is found in the cytoskeleton. The protein resides in the microtubule organizing center. It localises to the centrosome. Its subcellular location is the spindle. Required for organization of the cellular microtubule array and microtubule anchoring at the centrosome. Positively regulates the activity of the minus-end directed microtubule motor protein dynein. May enhance dynein-mediated microtubule sliding by targeting dynein to the microtubule plus end. This is Nuclear distribution protein nudE-like 1-A (ndel1a) from Danio rerio (Zebrafish).